Reading from the N-terminus, the 319-residue chain is Probable arabinan endo-1,5-alpha-L-arabinosidase C (319 aa).

The N-terminal stretch at 1-16 is a signal peptide; sequence MFVYTLIFLFLAAANA. Catalysis depends on aspartate 31, which acts as the Proton acceptor. Residue asparagine 190 is glycosylated (N-linked (GlcNAc...) asparagine). Glutamate 198 (proton donor) is an active-site residue. N-linked (GlcNAc...) asparagine glycosylation is present at asparagine 222.

The protein belongs to the glycosyl hydrolase 43 family.

Its subcellular location is the secreted. The enzyme catalyses Endohydrolysis of (1-&gt;5)-alpha-arabinofuranosidic linkages in (1-&gt;5)-arabinans.. It functions in the pathway glycan metabolism; L-arabinan degradation. Functionally, endo-1,5-alpha-L-arabinanase involved in degradation of pectin. Its preferred substrate is linear 1,5-alpha-L-arabinan. The polypeptide is Probable arabinan endo-1,5-alpha-L-arabinosidase C (abnC) (Aspergillus clavatus (strain ATCC 1007 / CBS 513.65 / DSM 816 / NCTC 3887 / NRRL 1 / QM 1276 / 107)).